A 489-amino-acid chain; its full sequence is Dipeptide and tripeptide permease B (489 aa).

The Cytoplasmic portion of the chain corresponds to 1–27 (MNTTTPMGMLQQPRPFFMIFFVELWER). Residues 28–48 (FGYYGVQGVLAVFFVKQLGFS) form a helical membrane-spanning segment. The Periplasmic portion of the chain corresponds to 49–52 (QEQA). A helical transmembrane segment spans residues 53–73 (FVTFGAFAALVYGLISIGGYV). The Cytoplasmic portion of the chain corresponds to 74-82 (GDHLLGTKR). A helical transmembrane segment spans residues 83–103 (TIVLGALVLAIGYFMTGLSLL). The Periplasmic portion of the chain corresponds to 104-106 (KPD). The helical transmembrane segment at 107–127 (LIFIALGTIAVGNGLFKANPA) threads the bilayer. The Cytoplasmic portion of the chain corresponds to 128–146 (SLLSKCYPPKAPRLDGAFT). Residues 147-167 (LFYMSINIGSLIALSLAPVIA) form a helical membrane-spanning segment. The Periplasmic portion of the chain corresponds to 168-172 (DRFGY). Residues 173–193 (SVTYNLCGAGLIIALLVYIAC) traverse the membrane as a helical segment. Topologically, residues 194-210 (RGMVKDIGSEPDFRPMS) are cytoplasmic. The chain crosses the membrane as a helical span at residues 211–231 (FSKLLYVLLGSVVMIFVCAWL). The Periplasmic segment spans residues 232 to 233 (MH). A helical membrane pass occupies residues 234–254 (NVEVANLVLIVLSIVVTIIFF). At 255-267 (RQAFKLDKTGRNK) the chain is on the cytoplasmic side. A helical membrane pass occupies residues 268–288 (MFVAFVLMLEAVVFYILYAQM). Residues 289 to 311 (PTSLNFFAINNVHHEILGFSINP) are Periplasmic-facing. The helical transmembrane segment at 312–332 (VSFQALNPFWVVLASPILAGI) threads the bilayer. Topologically, residues 333 to 350 (YTHLGSKGKDLSMPMKFT) are cytoplasmic. Residues 351–371 (LGMFMCSLGFLTAAAAGMWFA) traverse the membrane as a helical segment. At 372 to 380 (DAQGLTSPW) the chain is on the periplasmic side. The chain crosses the membrane as a helical span at residues 381–401 (FIVLVYLFQSLGELFISALGL). Residues 402-411 (AMVAALVPQH) are Cytoplasmic-facing. A helical membrane pass occupies residues 412 to 432 (LMGFILGISFLTQAAAFLLGG). Over 433–456 (YVATFTAVPDNITDPLETLPVYTN) the chain is Periplasmic. Residues 457–477 (VFGKIGLVTLGVAVVMLLMVP) traverse the membrane as a helical segment. Topologically, residues 478-489 (WLKRMIAAPESH) are cytoplasmic.

Belongs to the major facilitator superfamily. Proton-dependent oligopeptide transporter (POT/PTR) (TC 2.A.17) family. DtpB subfamily.

The protein resides in the cell inner membrane. Its function is as follows. Proton-dependent permease that transports di- and tripeptides. The sequence is that of Dipeptide and tripeptide permease B from Shigella dysenteriae serotype 1 (strain Sd197).